Reading from the N-terminus, the 453-residue chain is Bifunctional protein GlmU (453 aa).

A pyrophosphorylase region spans residues 1 to 226 (MKFSTVILAA…SIEVEGVNDR (226 aa)). UDP-N-acetyl-alpha-D-glucosamine is bound by residues 8–11 (LAAG), lysine 22, glutamine 73, 78–79 (GT), 100–102 (YGD), glycine 137, glutamate 151, asparagine 166, and asparagine 224. Aspartate 102 provides a ligand contact to Mg(2+). Asparagine 224 contributes to the Mg(2+) binding site. The tract at residues 227–247 (IQLARLERAFQARQAKKLLEQ) is linker. The N-acetyltransferase stretch occupies residues 248 to 453 (GVMLRDPARF…AGWQRPAKKK (206 aa)). The UDP-N-acetyl-alpha-D-glucosamine site is built by arginine 330 and lysine 348. Catalysis depends on histidine 360, which acts as the Proton acceptor. Tyrosine 363 and asparagine 374 together coordinate UDP-N-acetyl-alpha-D-glucosamine. Acetyl-CoA is bound by residues alanine 377, 383 to 384 (NY), serine 402, alanine 420, and arginine 437.

This sequence in the N-terminal section; belongs to the N-acetylglucosamine-1-phosphate uridyltransferase family. The protein in the C-terminal section; belongs to the transferase hexapeptide repeat family. As to quaternary structure, homotrimer. Requires Mg(2+) as cofactor.

It localises to the cytoplasm. The catalysed reaction is alpha-D-glucosamine 1-phosphate + acetyl-CoA = N-acetyl-alpha-D-glucosamine 1-phosphate + CoA + H(+). The enzyme catalyses N-acetyl-alpha-D-glucosamine 1-phosphate + UTP + H(+) = UDP-N-acetyl-alpha-D-glucosamine + diphosphate. It functions in the pathway nucleotide-sugar biosynthesis; UDP-N-acetyl-alpha-D-glucosamine biosynthesis; N-acetyl-alpha-D-glucosamine 1-phosphate from alpha-D-glucosamine 6-phosphate (route II): step 2/2. The protein operates within nucleotide-sugar biosynthesis; UDP-N-acetyl-alpha-D-glucosamine biosynthesis; UDP-N-acetyl-alpha-D-glucosamine from N-acetyl-alpha-D-glucosamine 1-phosphate: step 1/1. It participates in bacterial outer membrane biogenesis; LPS lipid A biosynthesis. Its function is as follows. Catalyzes the last two sequential reactions in the de novo biosynthetic pathway for UDP-N-acetylglucosamine (UDP-GlcNAc). The C-terminal domain catalyzes the transfer of acetyl group from acetyl coenzyme A to glucosamine-1-phosphate (GlcN-1-P) to produce N-acetylglucosamine-1-phosphate (GlcNAc-1-P), which is converted into UDP-GlcNAc by the transfer of uridine 5-monophosphate (from uridine 5-triphosphate), a reaction catalyzed by the N-terminal domain. This Vibrio cholerae serotype O1 (strain M66-2) protein is Bifunctional protein GlmU.